We begin with the raw amino-acid sequence, 410 residues long: Iron-sulfur cluster assembly SufBD family protein MTH_1150 (410 aa).

Belongs to the iron-sulfur cluster assembly SufBD family.

This is Iron-sulfur cluster assembly SufBD family protein MTH_1150 from Methanothermobacter thermautotrophicus (strain ATCC 29096 / DSM 1053 / JCM 10044 / NBRC 100330 / Delta H) (Methanobacterium thermoautotrophicum).